A 193-amino-acid polypeptide reads, in one-letter code: Peptidyl-tRNA hydrolase (193 aa).

Residue Tyr15 coordinates tRNA. The Proton acceptor role is filled by His20. TRNA-binding residues include Phe65, Asn67, and Asn113.

This sequence belongs to the PTH family. As to quaternary structure, monomer.

The protein localises to the cytoplasm. It catalyses the reaction an N-acyl-L-alpha-aminoacyl-tRNA + H2O = an N-acyl-L-amino acid + a tRNA + H(+). Hydrolyzes ribosome-free peptidyl-tRNAs (with 1 or more amino acids incorporated), which drop off the ribosome during protein synthesis, or as a result of ribosome stalling. Functionally, catalyzes the release of premature peptidyl moieties from peptidyl-tRNA molecules trapped in stalled 50S ribosomal subunits, and thus maintains levels of free tRNAs and 50S ribosomes. The polypeptide is Peptidyl-tRNA hydrolase (Ehrlichia ruminantium (strain Welgevonden)).